Consider the following 174-residue polypeptide: Co-chaperone protein HscB (174 aa).

In terms of domain architecture, J spans 2 to 74; sequence DYFTLFGLPA…LKRAEYMLSL (73 aa).

Belongs to the HscB family. As to quaternary structure, interacts with HscA and stimulates its ATPase activity. Interacts with IscU.

Its function is as follows. Co-chaperone involved in the maturation of iron-sulfur cluster-containing proteins. Seems to help targeting proteins to be folded toward HscA. The sequence is that of Co-chaperone protein HscB from Yersinia pestis bv. Antiqua (strain Antiqua).